Reading from the N-terminus, the 231-residue chain is Allergen Ani s 10 (231 aa).

Positions 1-19 (MHLITALVLLLQLIHFITS) are cleaved as a signal peptide. A run of 7 repeats spans residues 28 to 56 (GGPG…QQNI), 57 to 85 (GGPG…QENI), 86 to 114 (GGPG…QQSI), 115 to 143 (EGPG…QQSI), 144 to 172 (EGPG…QQNI), 173 to 201 (GGPG…QQNI), and 204 to 231 (GGPG…SMQA). The 6 X 29 AA tandem repeats of [EG]-G-P-G-P-V-[IV]-[SG]-G-S-G-I-G-[ND]-V-W-[NE]-K-A-N-E-[QP]-A-[AE]-[QEH]-Q-[EQ]-[NS]-I stretch occupies residues 28–201 (GGPGPVVGGS…NEQAAEQQNI (174 aa)). Disordered stretches follow at residues 107–126 (QAAH…GSGI) and 134–231 (NEQA…SMQA). Composition is skewed to low complexity over residues 114–123 (IEGPGPVVSG), 143–152 (IEGPGPVVSG), and 177–187 (PVISGSGIGNV).

The sequence is that of Allergen Ani s 10 from Anisakis simplex (Herring worm).